The primary structure comprises 116 residues: Nucleoid-associated protein PMM0020 (116 aa).

The segment covering 87–98 has biased composition (basic and acidic residues); that stretch reads ESSTTTMKERMN. The tract at residues 87 to 116 is disordered; it reads ESSTTTMKERMNDLTGGLNLNLPGLDNNDS. A compositionally biased stretch (low complexity) spans 99–116; it reads DLTGGLNLNLPGLDNNDS.

Belongs to the YbaB/EbfC family. Homodimer.

Its subcellular location is the cytoplasm. The protein resides in the nucleoid. Functionally, binds to DNA and alters its conformation. May be involved in regulation of gene expression, nucleoid organization and DNA protection. In Prochlorococcus marinus subsp. pastoris (strain CCMP1986 / NIES-2087 / MED4), this protein is Nucleoid-associated protein PMM0020.